We begin with the raw amino-acid sequence, 186 residues long: Lipoprotein signal peptidase (186 aa).

Helical transmembrane passes span 8–28, 44–64, 66–86, and 97–117; these read FFSV…FLDL, IPVL…FVFG, FQDN…FLIF, and AWGW…KFFV. Residues Asp142 and Asp164 contribute to the active site. Residues 157 to 177 form a helical membrane-spanning segment; the sequence is WPAFNVADSCVSIGIVILLFT.

Belongs to the peptidase A8 family.

The protein resides in the cell inner membrane. It carries out the reaction Release of signal peptides from bacterial membrane prolipoproteins. Hydrolyzes -Xaa-Yaa-Zaa-|-(S,diacylglyceryl)Cys-, in which Xaa is hydrophobic (preferably Leu), and Yaa (Ala or Ser) and Zaa (Gly or Ala) have small, neutral side chains.. Its pathway is protein modification; lipoprotein biosynthesis (signal peptide cleavage). In terms of biological role, this protein specifically catalyzes the removal of signal peptides from prolipoproteins. The polypeptide is Lipoprotein signal peptidase (Leptospira biflexa serovar Patoc (strain Patoc 1 / ATCC 23582 / Paris)).